The following is a 411-amino-acid chain: MIEVLLVTICLAVFPYQGSSIILESGNVNDYEVVYPRKVSALPKGAVQPKYEDTMQYELKENGEPVVLHLEKNKGLFSEDYSETHYSPDGREITTYPSVEDHCYYHGRIHNDADSTASISACDGLKGYFKLQGQTYLIEPLKLPDSEAHAVFKYENIEKEDEAPKMCGVTQNWESDESIKKASQLYLTPEQQRFPQRYVKLAIVVDYRMYIKYNRDSNKITVRVHEMVNHVNEMYKPLNVAITLSLLRIWSTRDLITVQSDSKVTLGSFGDWRKTVLLKQQSHDCAHLLTDITFTKNVIGVAYKKGMCDPKLSVGLVQDYSSNVFVVAAIMTHELGHNLGMEHDEDENGKKCKCDTCIMSPAISDPPAQLFSDCSKNDYHTFLTNSKPQCILNAPLRTDTVSTPVSGNEPL.

A signal peptide spans 1–20 (MIEVLLVTICLAVFPYQGSS). A propeptide spanning residues 21 to 190 (IILESGNVND…KASQLYLTPE (170 aa)) is cleaved from the precursor. The Peptidase M12B domain occupies 197–395 (RYVKLAIVVD…SKPQCILNAP (199 aa)). Aspartate 284 is a binding site for Ca(2+). 3 disulfide bridges follow: cysteine 308/cysteine 390, cysteine 352/cysteine 374, and cysteine 354/cysteine 357. Position 333 (histidine 333) interacts with Zn(2+). Residue glutamate 334 is part of the active site. Zn(2+) contacts are provided by histidine 337 and histidine 343. Cysteine 390 and asparagine 393 together coordinate Ca(2+). Positions 396–411 (LRTDTVSTPVSGNEPL) are excised as a propeptide.

The protein belongs to the venom metalloproteinase (M12B) family. P-II subfamily. Monomer. It depends on Zn(2+) as a cofactor. As to expression, expressed by the venom gland.

It is found in the secreted. Its function is as follows. Snake venom metalloproteinase that impairs hemostasis in the envenomed animal. The sequence is that of Zinc metalloproteinase/disintegrin from Protobothrops mucrosquamatus (Taiwan habu).